A 204-amino-acid chain; its full sequence is MIASLRGTVISIGLGTAVIECQGVGYEVTTTPTTLARLQRGEEATLLTTMVVREDAMKLYGFIDDQSREMFALLQTVTGLGPRLALACESVLTPLEIAQAIAGGDAKTLQRVPGVGKRMADRLIVELKDKVAAYTVGVVDDGAPTAPTQGVAPVVVVDQVTQALTGLGFTEKQADDAVAAVLSADPGLDTSAALRAALAKLGGK.

Positions 1-63 (MIASLRGTVI…EDAMKLYGFI (63 aa)) are domain I. A domain II region spans residues 64-142 (DDQSREMFAL…AYTVGVVDDG (79 aa)). Residues 143-151 (APTAPTQGV) form a flexible linker region. The tract at residues 152–204 (APVVVVDQVTQALTGLGFTEKQADDAVAAVLSADPGLDTSAALRAALAKLGGK) is domain III.

The protein belongs to the RuvA family. As to quaternary structure, homotetramer. Forms an RuvA(8)-RuvB(12)-Holliday junction (HJ) complex. HJ DNA is sandwiched between 2 RuvA tetramers; dsDNA enters through RuvA and exits via RuvB. An RuvB hexamer assembles on each DNA strand where it exits the tetramer. Each RuvB hexamer is contacted by two RuvA subunits (via domain III) on 2 adjacent RuvB subunits; this complex drives branch migration. In the full resolvosome a probable DNA-RuvA(4)-RuvB(12)-RuvC(2) complex forms which resolves the HJ.

Its subcellular location is the cytoplasm. The RuvA-RuvB-RuvC complex processes Holliday junction (HJ) DNA during genetic recombination and DNA repair, while the RuvA-RuvB complex plays an important role in the rescue of blocked DNA replication forks via replication fork reversal (RFR). RuvA specifically binds to HJ cruciform DNA, conferring on it an open structure. The RuvB hexamer acts as an ATP-dependent pump, pulling dsDNA into and through the RuvAB complex. HJ branch migration allows RuvC to scan DNA until it finds its consensus sequence, where it cleaves and resolves the cruciform DNA. The protein is Holliday junction branch migration complex subunit RuvA of Corynebacterium efficiens (strain DSM 44549 / YS-314 / AJ 12310 / JCM 11189 / NBRC 100395).